A 61-amino-acid chain; its full sequence is Small ribosomal subunit protein uS14 (61 aa).

Zn(2+) contacts are provided by C24, C27, C40, and C43.

The protein belongs to the universal ribosomal protein uS14 family. Zinc-binding uS14 subfamily. Part of the 30S ribosomal subunit. Contacts proteins S3 and S10. Zn(2+) is required as a cofactor.

In terms of biological role, binds 16S rRNA, required for the assembly of 30S particles and may also be responsible for determining the conformation of the 16S rRNA at the A site. This is Small ribosomal subunit protein uS14 from Mycobacterium sp. (strain JLS).